The sequence spans 398 residues: Lysophosphatidylserine lipase ABHD12 (398 aa).

Topologically, residues 1-74 are cytoplasmic; it reads MRKRTEPVAL…RKGLWLRLRK (74 aa). The chain crosses the membrane as a helical span at residues 75–95; that stretch reads ILFCVLGLYIAIPFLIKLCPG. Over 96-398 the chain is Extracellular; sequence IQAKLIFLNF…LGKSEPEHQH (303 aa). An N-linked (GlcNAc...) asparagine glycan is attached at N123. The active-site Nucleophile is S246. Catalysis depends on charge relay system residues D333 and H372.

Belongs to the serine esterase family.

It is found in the endoplasmic reticulum membrane. It carries out the reaction 1-(9Z-octadecenoyl)-sn-glycero-3-phospho-L-serine + H2O = sn-glycero-3-phospho-L-serine + (9Z)-octadecenoate + H(+). It catalyses the reaction 1-(9Z-octadecenoyl)-sn-glycero-3-phospho-(1'-sn-glycerol) + H2O = sn-glycero-3-phospho-(1'-sn-glycerol) + (9Z)-octadecenoate + H(+). The enzyme catalyses 1-(9Z-octadecenoyl)-sn-glycero-3-phospho-(1D-myo-inositol) + H2O = sn-glycero-3-phospho-1D-myo-inositol + (9Z)-octadecenoate + H(+). The catalysed reaction is 1-(9Z-octadecenoyl)-sn-glycero-3-phosphoethanolamine + H2O = sn-glycero-3-phosphoethanolamine + (9Z)-octadecenoate + H(+). It carries out the reaction 1-(9Z-octadecenoyl)-sn-glycero-3-phosphocholine + H2O = 1-(9Z-octadecenoyl)-sn-glycerol + phosphocholine + H(+). It catalyses the reaction 2-(9Z-octadecenoyl)-glycerol + H2O = glycerol + (9Z)-octadecenoate + H(+). The enzyme catalyses 1-hexadecanoyl-sn-glycero-3-phospho-L-serine + H2O = sn-glycero-3-phospho-L-serine + hexadecanoate + H(+). The catalysed reaction is 2-(5Z,8Z,11Z,14Z-eicosatetraenoyl)-glycerol + H2O = glycerol + (5Z,8Z,11Z,14Z)-eicosatetraenoate + H(+). It carries out the reaction Hydrolyzes glycerol monoesters of long-chain fatty acids.. It catalyses the reaction 1-decanoylglycerol + H2O = decanoate + glycerol + H(+). The enzyme catalyses 1-dodecanoylglycerol + H2O = dodecanoate + glycerol + H(+). The catalysed reaction is 1-tetradecanoylglycerol + H2O = tetradecanoate + glycerol + H(+). It carries out the reaction 2-hexadecanoylglycerol + H2O = glycerol + hexadecanoate + H(+). It catalyses the reaction 1-(9Z-octadecenoyl)-glycerol + H2O = glycerol + (9Z)-octadecenoate + H(+). The enzyme catalyses 2-(9Z,12Z-octadecadienoyl)-glycerol + H2O = (9Z,12Z)-octadecadienoate + glycerol + H(+). The catalysed reaction is 1-(5Z,8Z,11Z,14Z-eicosatetraenoyl)-glycerol + H2O = glycerol + (5Z,8Z,11Z,14Z)-eicosatetraenoate + H(+). It carries out the reaction 1-(9Z,12Z-octadecadienoyl)-glycerol + H2O = (9Z,12Z)-octadecadienoate + glycerol + H(+). It catalyses the reaction 1-hexadecanoylglycerol + H2O = glycerol + hexadecanoate + H(+). The enzyme catalyses 1-octadecanoylglycerol + H2O = octadecanoate + glycerol + H(+). The catalysed reaction is 1-octadecanoyl-2-(9,10-epoxyoctadecanoyl)-sn-glycero-3-phospho-L-serine + H2O = 9,10-epoxyoctadecanoate + 1-octadecanoyl-sn-glycero-3-phosphoserine + H(+). It carries out the reaction 1-octadecanoyl-2-(10-hydroxyoctadecanoyl)-sn-glycero-3-phospho-L-serine + H2O = 1-octadecanoyl-sn-glycero-3-phosphoserine + 10-hydroxyoctadecanoate + H(+). It catalyses the reaction 1-hexadecanoyl-2-(10-hydroxyoctadecanoyl)-sn-glycero-3-phospho-L-serine + H2O = 10-hydroxyoctadecanoate + 1-hexadecanoyl-sn-glycero-3-phospho-L-serine + H(+). Functionally, lysophosphatidylserine (LPS) lipase that mediates the hydrolysis of lysophosphatidylserine, a class of signaling lipids that regulates immunological and neurological processes. Represents a major lysophosphatidylserine lipase in the brain, thereby playing a key role in the central nervous system. Also able to hydrolyze oxidized phosphatidylserine; oxidized phosphatidylserine is produced in response to severe inflammatory stress and constitutes a proapoptotic 'eat me' signal. Also has monoacylglycerol (MAG) lipase activity: hydrolyzes 2-arachidonoylglycerol (2-AG), thereby acting as a regulator of endocannabinoid signaling pathways. Has a strong preference for very-long-chain lipid substrates; substrate specificity is likely due to improved catalysis and not improved substrate binding. The polypeptide is Lysophosphatidylserine lipase ABHD12 (Macaca fascicularis (Crab-eating macaque)).